A 446-amino-acid chain; its full sequence is Signal recognition particle protein (446 aa).

GTP-binding positions include 106 to 113 (GLQGSGKT), 188 to 192 (DTAGR), and 246 to 249 (SKLD).

This sequence belongs to the GTP-binding SRP family. SRP54 subfamily. In terms of assembly, part of the signal recognition particle protein translocation system, which is composed of SRP and FtsY.

The protein localises to the cytoplasm. The catalysed reaction is GTP + H2O = GDP + phosphate + H(+). In terms of biological role, involved in targeting and insertion of nascent membrane proteins into the cytoplasmic membrane. Binds to the hydrophobic signal sequence of the ribosome-nascent chain (RNC) as it emerges from the ribosomes. The SRP-RNC complex is then targeted to the cytoplasmic membrane where it interacts with the SRP receptor FtsY. The protein is Signal recognition particle protein of Mycoplasma genitalium (strain ATCC 33530 / DSM 19775 / NCTC 10195 / G37) (Mycoplasmoides genitalium).